A 252-amino-acid polypeptide reads, in one-letter code: tRNA pseudouridine synthase A (252 aa).

Residue D52 is the Nucleophile of the active site. Residue Y112 participates in substrate binding.

This sequence belongs to the tRNA pseudouridine synthase TruA family. In terms of assembly, homodimer.

The enzyme catalyses uridine(38/39/40) in tRNA = pseudouridine(38/39/40) in tRNA. In terms of biological role, formation of pseudouridine at positions 38, 39 and 40 in the anticodon stem and loop of transfer RNAs. This chain is tRNA pseudouridine synthase A, found in Porphyromonas gingivalis (strain ATCC 33277 / DSM 20709 / CIP 103683 / JCM 12257 / NCTC 11834 / 2561).